A 301-amino-acid chain; its full sequence is Sulfate adenylyltransferase subunit 2 (301 aa).

The protein belongs to the PAPS reductase family. CysD subfamily. Heterodimer composed of CysD, the smaller subunit, and CysN.

The catalysed reaction is sulfate + ATP + H(+) = adenosine 5'-phosphosulfate + diphosphate. It participates in sulfur metabolism; hydrogen sulfide biosynthesis; sulfite from sulfate: step 1/3. Functionally, with CysN forms the ATP sulfurylase (ATPS) that catalyzes the adenylation of sulfate producing adenosine 5'-phosphosulfate (APS) and diphosphate, the first enzymatic step in sulfur assimilation pathway. APS synthesis involves the formation of a high-energy phosphoric-sulfuric acid anhydride bond driven by GTP hydrolysis by CysN coupled to ATP hydrolysis by CysD. The chain is Sulfate adenylyltransferase subunit 2 from Citrifermentans bemidjiense (strain ATCC BAA-1014 / DSM 16622 / JCM 12645 / Bem) (Geobacter bemidjiensis).